Here is a 131-residue protein sequence, read N- to C-terminus: Profilin-2 (131 aa).

The protein belongs to the profilin family. Occurs in many kinds of cells as a complex with monomeric actin in a 1:1 ratio. Expressed in vascular bundles of roots, hypocotyls, cotyledons, leaves, sepals, petals, stamen filaments and stalks of developing seeds. Expressed in leaf epidermal cells, trichomes and stem epidermal cells. Detected in phloem exudates (at protein level).

The protein localises to the cytoplasm. It localises to the cytoskeleton. The protein resides in the endoplasmic reticulum. Its subcellular location is the cytosol. It is found in the nucleus. Binds to actin monomers and regulates the organization of the actin cytoskeleton. At high concentrations, profilin prevents the polymerization of actin, whereas it enhances it at low concentrations. At low concentrations, associates with the poly-proline motif of formins to enhance actin filament elongation rate. Binds G-actin and poly-L-proline with low affinity in vitro. Binds ACT1, ACT7 and ACT11 and inhibits actin polymerization. May be involved in the cross-talk between vesicular trafficking and the actin cytoskeleton. Inhibits cell growth of various pathogenic fungal strains. May play a role as antifungal proteins in the defense system against fungal pathogen attacks. This Arabidopsis thaliana (Mouse-ear cress) protein is Profilin-2.